The primary structure comprises 341 residues: Cathepsin B-like cysteine proteinase 1 (341 aa).

An N-terminal signal peptide occupies residues 1-19; sequence MKYLFFALCLYLYQGISEA. Residues 20–88 constitute a propeptide, activation peptide; sequence EVPAEQIPLE…VEDEELEENN (69 aa). The N-linked (GlcNAc...) asparagine glycan is linked to Asn-103. 6 cysteine pairs are disulfide-bonded: Cys-104–Cys-133, Cys-116–Cys-160, Cys-152–Cys-218, Cys-153–Cys-156, Cys-189–Cys-222, and Cys-197–Cys-209. Residue Cys-119 is part of the active site. An N-linked (GlcNAc...) asparagine glycan is attached at Asn-202. Catalysis depends on residues His-288 and Asn-308.

It belongs to the peptidase C1 family.

In terms of biological role, expression of the protease correlates with blood-feeding and suggests a role for the protease in blood digestion. The protein is Cathepsin B-like cysteine proteinase 1 (CP-1) of Ostertagia ostertagi (Brown stomach worm).